Reading from the N-terminus, the 88-residue chain is Sec-independent protein translocase protein TatA (88 aa).

A helical transmembrane segment spans residues 1 to 21 (MGGIGIWQLAIITVIVILLFG). The interval 46–88 (DNDKDSTQVDDKDSTQVDDNAKQPSNKKVEENIKEQSKEKDRA) is disordered.

It belongs to the TatA/E family. As to quaternary structure, the Tat system comprises two distinct complexes: a TatABC complex, containing multiple copies of TatA, TatB and TatC subunits, and a separate TatA complex, containing only TatA subunits. Substrates initially bind to the TatABC complex, which probably triggers association of the separate TatA complex to form the active translocon.

Its subcellular location is the cell inner membrane. Its function is as follows. Part of the twin-arginine translocation (Tat) system that transports large folded proteins containing a characteristic twin-arginine motif in their signal peptide across membranes. TatA could form the protein-conducting channel of the Tat system. This chain is Sec-independent protein translocase protein TatA, found in Psychromonas ingrahamii (strain DSM 17664 / CCUG 51855 / 37).